The chain runs to 1854 residues: Immunoglobulin A1 protease (1854 aa).

The first 37 residues, 1–37 (MKKFLGEKQTRFAFRKLAVGLVSAAISSLFFVSIVGV), serve as a signal peptide directing secretion. A propeptide spanning residues 38–99 (DSVQAQEKLN…NAGAKTLPNT (62 aa)) is cleaved from the precursor. The short motif at 96 to 100 (LPNTG) is the LPXTG sorting signal element. A Pentaglycyl murein peptidoglycan amidated threonine modification is found at Thr-99. 2 helical membrane passes run 106–125 (TMMAAGLLLTTIGLVVFAVS) and 132–154 (KFLLTVLVGASVGGGLILSVDAL). Topologically, residues 155–1854 (ENGSLLQYNA…FRKSIFENQK (1700 aa)) are extracellular. The G5 domain occupies 256–335 (KPELLYKETS…PKIVEKGTKK (80 aa)). A run of 10 repeats spans residues 349-368 (VQPEQVAPLPEYTGVQSGAI), 369-388 (VEPEQVASLPEYSGTLSGAI), 389-406 (VEPEQIEPEIGGVQSGAI), 407-426 (VEPEQVTPLPEYTGTQAGAV), 427-446 (VSPEQVAPLPEYTGTQSGAI), 447-466 (VEPAQVTPLPEYTGVQSGAI), 467-486 (VKPAQVTPLPEYTGTQSGAI), 487-506 (VEPEQVTPSPEYTGVQAGAI), 507-526 (VEPEQVASLPEYTGSQAGAI), and 527-546 (VEPEQVEPPQEYTGNIEPAA). The 10 X 20 AA approximate tandem repeats stretch occupies residues 349 to 546 (VQPEQVAPLP…EYTGNIEPAA (198 aa)). Low complexity predominate over residues 533 to 550 (EPPQEYTGNIEPAAPEAE). Residues 533–570 (EPPQEYTGNIEPAAPEAENPTEKAQEPKEQKQEPEKNI) are disordered. Basic and acidic residues predominate over residues 552–570 (PTEKAQEPKEQKQEPEKNI). Zn(2+) is bound at residue His-1494. Glu-1495 is a catalytic residue. Positions 1498 and 1518 each coordinate Zn(2+).

It belongs to the peptidase M26 family. Zn(2+) serves as cofactor. In terms of processing, the Gram-positive cell-wall anchor motif LPXTG is located in the N-terminal part, in contrast to such motifs in other known streptococcal and staphylococcal proteins. The protease could be cleaved by the sortase and anchored in the membrane via the two potential N-terminal transmembrane domains, whereas the propeptide located prior to the LPXTG motif would remain attached to the cell wall peptidoglycan by an amide bond.

It localises to the secreted. It is found in the cell wall. The protein resides in the membrane. The catalysed reaction is Cleavage of Pro-|-Thr bond in the hinge region of the heavy chain of human IgA.. With respect to regulation, inhibited by EDTA. Zinc metalloproteinase which cleaves human immunoglobulin A1 (IgA1) in the hinge region. The sequence is that of Immunoglobulin A1 protease (iga) from Streptococcus sanguinis.